The sequence spans 194 residues: Molybdenum cofactor guanylyltransferase (194 aa).

GTP is bound by residues 12 to 14 (LAG), K25, N53, D71, and D101. D101 lines the Mg(2+) pocket.

Belongs to the MobA family. As to quaternary structure, monomer. An equilibrium exists between a monomeric and oligomeric form of the enzyme, which could be an octamer; whether this oligomeric arrangement is of functional relevance is unclear. Interacts with MoeA and MobB in vivo. The cofactor is Mg(2+). Mn(2+) serves as cofactor.

The protein resides in the cytoplasm. The enzyme catalyses Mo-molybdopterin + GTP + H(+) = Mo-molybdopterin guanine dinucleotide + diphosphate. Transfers a GMP moiety from GTP to Mo-molybdopterin (Mo-MPT) cofactor (Moco or molybdenum cofactor) to form Mo-molybdopterin guanine dinucleotide (Mo-MGD) cofactor. Is also involved in the biosynthesis of the bis-MGD form of the Moco cofactor (Mo-bisMGD) in which the metal is symmetrically ligated by the dithiolene groups of two MGD molecules. Is necessary and sufficient for the in vitro activation of the DMSOR molybdoenzyme that uses the Mo-bisMGD form of molybdenum cofactor, which implies formation and efficient insertion of the cofactor into the enzyme without the need of a chaperone. Is specific for GTP since other nucleotides such as ATP and GMP cannot be utilized. This chain is Molybdenum cofactor guanylyltransferase (mobA), found in Escherichia coli (strain K12).